A 113-amino-acid chain; its full sequence is Large ribosomal subunit protein bL19 (113 aa).

Belongs to the bacterial ribosomal protein bL19 family.

Functionally, this protein is located at the 30S-50S ribosomal subunit interface and may play a role in the structure and function of the aminoacyl-tRNA binding site. The polypeptide is Large ribosomal subunit protein bL19 (Mycobacteroides abscessus (strain ATCC 19977 / DSM 44196 / CCUG 20993 / CIP 104536 / JCM 13569 / NCTC 13031 / TMC 1543 / L948) (Mycobacterium abscessus)).